The primary structure comprises 372 residues: Protein phosphatase Mn(2+)-dependent 1K (372 aa).

Residues 1-29 (MSTAALLTLVRSGGNQVRRRVLLRARGLQ) constitute a mitochondrion transit peptide. The segment at 46-61 (KWSRFDPDGSGRPATW) is critical for association with the BCKDH complex. The PPM-type phosphatase domain occupies 94–346 (NVGSASQIGK…DNTTAVVVPF (253 aa)). Aspartate 127 and glycine 128 together coordinate Mn(2+). Serine 248 bears the Phosphoserine mark. Aspartate 298 and aspartate 337 together coordinate Mn(2+).

It belongs to the PP2C family. In terms of assembly, monomer. Interacts with E1 and E2 components of the branched-chain alpha-ketoacid dehydrogenase (BCKDH) complex; this interaction requires colocalization in mitochondria. Interacts with BCKDHA but not with BCKDHB of the E1 component. Interacts with the 24-meric E2 core composed of DBT monomers with a 24:1 stoichiometry; the N-terminal region (residues 49-61) of PPM1K and C-terminal linker of the lipoyl domain of DBT (residues 145-160) are critical for this interaction, whereas the lipoyl prosthetic group is dispensable. Competes with BCKDK for binding to the E2 core; this interaction is modulated by branched-chain alpha-keto acids. At steady state, BCKDH holoenzyme preferentially binds BCKDK and BCKDHA is phosphorylated. In response to high levels of branched-chain alpha-keto acids, the inhibitory BCKDK is replaced by activating PPM1K leading to BCKDHA dephosphorylation and BCAA degradation. The cofactor is Mn(2+).

The protein localises to the mitochondrion matrix. The enzyme catalyses O-phospho-L-seryl-[3-methyl-2-oxobutanoate dehydrogenase] + H2O = L-seryl-[3-methyl-2-oxobutanoate dehydrogenase] + phosphate. It carries out the reaction O-phospho-L-seryl-[protein] + H2O = L-seryl-[protein] + phosphate. It functions in the pathway protein modification. Functionally, serine/threonine-protein phosphatase component of macronutrients metabolism. Forms a functional kinase and phosphatase pair with BCKDK, serving as a metabolic regulatory node that coordinates branched-chain amino acids (BCAAs) with glucose and lipid metabolism via two distinct phosphoprotein targets: mitochondrial BCKDHA subunit of the branched-chain alpha-ketoacid dehydrogenase (BCKDH) complex and cytosolic ACLY, a lipogenic enzyme of Krebs cycle. At high levels of branched-chain ketoacids, dephosphorylates and activates mitochondrial BCKDH complex, a multisubunit complex consisting of three multimeric components each involved in different steps of BCAA catabolism: E1 composed of BCKDHA and BCKDHB, E2 core composed of DBT monomers, and E3 composed of DLD monomers. Tightly associates with the E2 component of BCKDH complex and dephosphorylates BCKDHA on Ser-347. Regulates the reversible phosphorylation of ACLY in response to changes in cellular carbohydrate abundance such as occurs during fasting to feeding metabolic transition. At fasting state, appears to dephosphorylate ACLY on Ser-455 and inactivate it. Refeeding stimulates MLXIPL/ChREBP transcription factor, leading to increased BCKDK to PPM1K expression ratio, phosphorylation and activation of ACLY that ultimately results in the generation of malonyl-CoA and oxaloacetate immediate substrates of de novo lipogenesis and gluconeogenesis, respectively. Recognizes phosphosites having SxS or RxxS motifs and strictly depends on Mn(2+) ions for the phosphatase activity. Regulates Ca(2+)-induced opening of mitochondrial transition pore and apoptotic cell death. This is Protein phosphatase Mn(2+)-dependent 1K (PPM1K) from Bos taurus (Bovine).